Here is a 563-residue protein sequence, read N- to C-terminus: MTDNKSIITSLSQVLPDIPVAEIAAKLESPKSSDLGDVAFPTFTLAKLLRQAPQQIASDIVNRIDQSNFEKVVATGPYVNFFLDKKMTSQATLKTILTQGAAFGDNNDGDGANVTIDMSSPNIAKPMSMGHLRSTVIGNALANITAKNGYHPIKINHLGDWGTQFGKLIYAYKTWGTEAEVKADPIATLLRYYVEFHEKAKIDDSLNDAGRAWFKKLEDGDEEAHQLWTWFRAESLKEFTEIYDRLEISFDSFNGEAFYNDKMDKVVDMLAEKSLLVESQGAQIVDLSDINPNLTPAMIKRTDGATLYMTRDLAAAVYRKETYNFAKSLYVVGGEQREHFVQMKAVLSLMGFDWADDVEHIAFGLITFNGKKMSTRKGDVVLLKDVLNDAHDLALKQIQEKNPDLADKATVAEQVGAGAVVFHDLMNDRTNNFDFNLEEVVRFEGDTGPYVQYTNARAKSILRKANTAVSVDELNLDDTATWDIITTLNQFPTIVQRAWQQREASIIAKYALSLSRAFNKYYANSKILLPDDQLNARLALVKAVTIILSESLRLLGVKAPEEM.

The 'HIGH' region motif lies at 121 to 131; the sequence is PNIAKPMSMGH.

Belongs to the class-I aminoacyl-tRNA synthetase family. In terms of assembly, monomer.

Its subcellular location is the cytoplasm. The enzyme catalyses tRNA(Arg) + L-arginine + ATP = L-arginyl-tRNA(Arg) + AMP + diphosphate. In Leuconostoc citreum (strain KM20), this protein is Arginine--tRNA ligase.